Consider the following 152-residue polypeptide: Deoxyuridine 5'-triphosphate nucleotidohydrolase (152 aa).

Residues 72 to 74, asparagine 85, and 89 to 91 each bind substrate; these read RSG and TID.

Belongs to the dUTPase family. Mg(2+) is required as a cofactor.

The catalysed reaction is dUTP + H2O = dUMP + diphosphate + H(+). It participates in pyrimidine metabolism; dUMP biosynthesis; dUMP from dCTP (dUTP route): step 2/2. This enzyme is involved in nucleotide metabolism: it produces dUMP, the immediate precursor of thymidine nucleotides and it decreases the intracellular concentration of dUTP so that uracil cannot be incorporated into DNA. The sequence is that of Deoxyuridine 5'-triphosphate nucleotidohydrolase from Rhodopseudomonas palustris (strain BisB5).